The following is a 225-amino-acid chain: MIEYLNVHGNPNIGVYIYANNKIALVPPTLTEKDKKKIEETLGVEVIETKIADMIINGVMIAGNDNGLLLPRIVKPEELDYLREHIGDKVRLEILEVRQTALGNLIAANNRGALVSPLIDKAILDKIKSVLGVETIYQRHLANIPTVGSMIVVTNRGGVVHPGVSDDEIRILNSVFGVEFTTATVNFGLYFVKAGLVANDHGALVGDETTGPELMRIQQALRLRG.

It belongs to the eIF-6 family.

Its function is as follows. Binds to the 50S ribosomal subunit and prevents its association with the 30S ribosomal subunit to form the 70S initiation complex. This chain is Translation initiation factor 6, found in Hyperthermus butylicus (strain DSM 5456 / JCM 9403 / PLM1-5).